A 378-amino-acid chain; its full sequence is Metacaspase-1B (378 aa).

Residues 1–70 (MCSPPPYPPQ…QEAQSFGGGA (70 aa)) are disordered. Over residues 10–29 (QGHHYPPSPHGSYYSPTPYG) the composition is skewed to low complexity. Residues H169 and C225 contribute to the active site.

The protein belongs to the peptidase C14B family.

Functionally, involved in cell death (apoptosis). This is Metacaspase-1B (casB) from Aspergillus terreus (strain NIH 2624 / FGSC A1156).